The sequence spans 259 residues: Small ribosomal subunit protein eS4 (259 aa).

Residues 41–105 (LPLSVLLKER…TDQSFRILYD (65 aa)) enclose the S4 RNA-binding domain. Position 248 is a phosphothreonine (threonine 248). Phosphoserine is present on serine 258.

This sequence belongs to the eukaryotic ribosomal protein eS4 family.

In Tetrahymena thermophila, this protein is Small ribosomal subunit protein eS4.